The primary structure comprises 168 residues: Small ribosomal subunit protein uS5 (168 aa).

In terms of domain architecture, S5 DRBM spans 13–76 (LAEKLIAVNR…EKARRNMINV (64 aa)).

The protein belongs to the universal ribosomal protein uS5 family. In terms of assembly, part of the 30S ribosomal subunit. Contacts proteins S4 and S8.

Functionally, with S4 and S12 plays an important role in translational accuracy. Located at the back of the 30S subunit body where it stabilizes the conformation of the head with respect to the body. This is Small ribosomal subunit protein uS5 from Pseudoalteromonas translucida (strain TAC 125).